A 930-amino-acid polypeptide reads, in one-letter code: Vacuolar membrane protease (930 aa).

Residues 1–28 (MPQEEVHDTSSVSDDNLTNTGGGGSNYY) form a disordered region. At 1–49 (MPQEEVHDTSSVSDDNLTNTGGGGSNYYNSHNQPNVFVRAIRSIFGYRK) the chain is on the cytoplasmic side. Residues 50 to 70 (TSLTLFVILTIIFTIALSLYD) traverse the membrane as a helical segment. Residues 71 to 379 (NNLDLTIELP…YFFSSPISAL (309 aa)) are Vacuolar-facing. Asparagine 163 carries N-linked (GlcNAc...) asparagine glycosylation. Zn(2+) contacts are provided by histidine 177 and aspartate 189. The active-site Proton acceptor is glutamate 222. Zn(2+)-binding residues include glutamate 223, glutamate 248, and histidine 320. An N-linked (GlcNAc...) asparagine glycan is attached at asparagine 354. Residues 380-400 (VTINSVLIVLFPILSGPLLFI) form a helical membrane-spanning segment. Topologically, residues 401–411 (TVRYKKWKIGT) are cytoplasmic. The chain crosses the membrane as a helical span at residues 412 to 432 (SNFLSLPLAIVLTVAIVMIVV). Topologically, residues 433 to 449 (NQGFQIANPFLPSSHPL) are vacuolar. A helical transmembrane segment spans residues 450-470 (LLVATTTSISLLIYYVFLNGV). Topologically, residues 471-480 (NWVSPSGDQK) are cytoplasmic. Residues 481–501 (LITIIEISFIYWLILIYVTHG) traverse the membrane as a helical segment. At 502-514 (LSQNKIGDDHTGE) the chain is on the vacuolar side. A helical transmembrane segment spans residues 515–535 (FPFTVLFFLEATASLFGLIGW). The Cytoplasmic portion of the chain corresponds to 536 to 598 (TFSRSIKQSS…FGYDWSLQYL (63 aa)). A disordered region spans residues 542–570 (KQSSNDGSDEPLLTGTAERYGSDDTDEDE). The helical transmembrane segment at 599 to 619 (LIVPISSLIIFNSGWLVLDGI) threads the bilayer. An N-linked (GlcNAc...) asparagine glycan is attached at asparagine 620. Over 620–631 (NKSIQESFAAEN) the chain is Vacuolar. The chain crosses the membrane as a helical span at residues 632-652 (LIYLLIQLFSQFWILPILPFV). Topologically, residues 653 to 657 (YKLNR) are cytoplasmic. A helical membrane pass occupies residues 658-678 (FIVFGLTIFAISGVALISFLD). Residues 679 to 930 (PFNQENPLKL…LVSVSLKIEV (252 aa)) lie on the Vacuolar side of the membrane. N-linked (GlcNAc...) asparagine glycosylation is found at asparagine 697, asparagine 768, asparagine 808, and asparagine 890.

It belongs to the peptidase M28 family. It depends on Zn(2+) as a cofactor.

It is found in the vacuole membrane. Its function is as follows. May be involved in vacuolar sorting and osmoregulation. The protein is Vacuolar membrane protease of Candida dubliniensis (strain CD36 / ATCC MYA-646 / CBS 7987 / NCPF 3949 / NRRL Y-17841) (Yeast).